The following is a 177-amino-acid chain: Large ribosomal subunit protein uL6 (177 aa).

This sequence belongs to the universal ribosomal protein uL6 family. As to quaternary structure, part of the 50S ribosomal subunit.

Its function is as follows. This protein binds to the 23S rRNA, and is important in its secondary structure. It is located near the subunit interface in the base of the L7/L12 stalk, and near the tRNA binding site of the peptidyltransferase center. This Rhodospirillum centenum (strain ATCC 51521 / SW) protein is Large ribosomal subunit protein uL6.